Reading from the N-terminus, the 74-residue chain is Pelophylaxin-3 (74 aa).

A signal peptide spans 1 to 22 (MFTLKKSLLLVFFLGTISLSLC). Positions 23-39 (EDERNADEDDGEMTEEV) are excised as a propeptide. Cysteines 68 and 74 form a disulfide.

As to expression, expressed by the skin glands.

The protein localises to the secreted. Its function is as follows. Antimicrobial peptide. In Pelophylax fukienensis (Fukien gold-striped pond frog), this protein is Pelophylaxin-3.